We begin with the raw amino-acid sequence, 416 residues long: Thioredoxin domain-containing protein 5 homolog (416 aa).

Residues 1–25 form the signal peptide; sequence MLTRSILSVAVCGLLLSPLLPITRA. 3 consecutive Thioredoxin domains span residues 26-145, 150-272, and 293-412; these read SQEE…KELS, ADLG…KMVG, and AGEE…KFLG. 3 disulfides stabilise this stretch: C65-C68, C194-C197, and C331-C334. The Prevents secretion from ER motif lies at 413 to 416; it reads HDEL.

It belongs to the protein disulfide isomerase family.

It localises to the endoplasmic reticulum. The protein resides in the cell surface. Possesses thioredoxin activity. Acts as a ligand for Drpr and is required for the phagocytosis of apoptotic cells. Binds to the extracellular region of Drpr and augments Drpr tyrosine phosphorylation. In Drosophila melanogaster (Fruit fly), this protein is Thioredoxin domain-containing protein 5 homolog.